A 122-amino-acid chain; its full sequence is Large ribosomal subunit protein uL14c (122 aa).

This sequence belongs to the universal ribosomal protein uL14 family. Part of the 50S ribosomal subunit.

The protein resides in the plastid. The protein localises to the chloroplast. Its function is as follows. Binds to 23S rRNA. The protein is Large ribosomal subunit protein uL14c of Chlorokybus atmophyticus (Soil alga).